A 351-amino-acid chain; its full sequence is MPTSVTASSSWSQILEMLLEGQNLPEVEATALMEAWLAEQLTPVQTGAFLAALRAKGVTGNELSGMAQVLRGACPLPCPLPDIPMVDTCGTGGDGADTFNISTAVAFTAAACGANVAKHGNRSASGKVGSADVLEGLGLQLKAPLVSVVEALVEVGVTFLFAPAWHPALVNLAPLRRSLGVRTVFNLLGPLVNPLQPNAQVLGVAKAELLNPMAEALQRLGLQRAVVVHGAGGLDEASLEGANAMRLLENGHLRQASIDSAELGLTRAPLQALQGGDLATNQAILSAVLQGGGTAPQRDVVALNTALVLWAAGLQDDLQAGVSTAKTCLQEGLPWQRLEGLRMALDHQIGE.

5-phospho-alpha-D-ribose 1-diphosphate-binding positions include G90, 93–94 (GD), T98, 100–103 (NIST), 118–126 (KHGNRSASG), and S130. G90 provides a ligand contact to anthranilate. S102 serves as a coordination point for Mg(2+). An anthranilate-binding site is contributed by N121. R176 provides a ligand contact to anthranilate. Positions 235 and 236 each coordinate Mg(2+).

It belongs to the anthranilate phosphoribosyltransferase family. As to quaternary structure, homodimer. Requires Mg(2+) as cofactor.

The enzyme catalyses N-(5-phospho-beta-D-ribosyl)anthranilate + diphosphate = 5-phospho-alpha-D-ribose 1-diphosphate + anthranilate. It functions in the pathway amino-acid biosynthesis; L-tryptophan biosynthesis; L-tryptophan from chorismate: step 2/5. In terms of biological role, catalyzes the transfer of the phosphoribosyl group of 5-phosphorylribose-1-pyrophosphate (PRPP) to anthranilate to yield N-(5'-phosphoribosyl)-anthranilate (PRA). The polypeptide is Anthranilate phosphoribosyltransferase (Prochlorococcus marinus (strain MIT 9313)).